The sequence spans 1026 residues: Multidrug resistance protein MdtC (1026 aa).

Topologically, residues 1–6 (MRFFAL) are cytoplasmic. A helical membrane pass occupies residues 7 to 29 (FIYRPVATILIAAAITLCGILGF). Topologically, residues 30–335 (RLLPVAPLPQ…TIRASLQEVE (306 aa)) are periplasmic. Residues 336–353 (ETLAISVALVILVVFLFL) form a helical membrane-spanning segment. Residues 354 to 359 (RSGRAT) lie on the Cytoplasmic side of the membrane. The chain crosses the membrane as a helical span at residues 360-379 (LIPAVAVPVSLIGTFAAMYL). The Periplasmic segment spans residues 380–388 (CGFSLNNLS). The helical transmembrane segment at 389-411 (LMALTIATGFVVDDAIVVLENIA) threads the bilayer. Topologically, residues 412-430 (RHLEAGMKPLQAALQGTRE) are cytoplasmic. The chain crosses the membrane as a helical span at residues 431–453 (VGFTVISMSLSLVAVFLPLLLMG). The Periplasmic portion of the chain corresponds to 454–467 (GLPGRLLREFAVTL). Residues 468–490 (SVAIGISLVVSLTLTPMMCGWML) form a helical membrane-spanning segment. Over 491-852 (KSSKPRTQPR…QVFQQTMNSQ (362 aa)) the chain is Cytoplasmic. A helical membrane pass occupies residues 853-875 (LILIVAAIATVYIVLGILYESYV). Over 876 to 894 (HPLTILSTLPSAGVGALLA) the chain is Periplasmic. The chain crosses the membrane as a helical span at residues 895–917 (LELFNAPFSLIALIGIMLLIGIV). Residues 918–947 (KKNAIMMVDFALEAQRSGGLTPEQAIFQAC) are Cytoplasmic-facing. Residues 948–970 (LLRFRPIMMTTLAALFGALPLVL) form a helical membrane-spanning segment. The Periplasmic segment spans residues 971 to 984 (SGGDGSELRQPLGI). Residues 985–1007 (TIVGGLVMSQLLTLYTTPVVYLF) traverse the membrane as a helical segment. Residues 1008–1026 (FDRLRLRFSRKNSKPVVEI) are Cytoplasmic-facing.

Belongs to the resistance-nodulation-cell division (RND) (TC 2.A.6) family. MdtC subfamily. As to quaternary structure, part of a tripartite efflux system composed of MdtA, MdtB and MdtC. MdtC forms a heteromultimer with MdtB.

It localises to the cell inner membrane. This chain is Multidrug resistance protein MdtC, found in Salmonella typhimurium (strain LT2 / SGSC1412 / ATCC 700720).